A 464-amino-acid polypeptide reads, in one-letter code: Macrophage metalloelastase (464 aa).

The first 17 residues, 1–17 (MKFLLLILTLWVTSSGA), serve as a signal peptide directing secretion. A propeptide spans 18–100 (DPLKENDMLF…DVYHFKTMPG (83 aa)) (activation peptide). Asn-69 carries N-linked (GlcNAc...) asparagine glycosylation. The short motif at 85–92 (PRCGVPDV) is the Cysteine switch element. A Zn(2+)-binding site is contributed by Cys-87. Ca(2+) is bound by residues Asp-119 and Asp-153. Residues His-163 and Asp-165 each coordinate Zn(2+). The Ca(2+) site is built by Asp-170, Gly-171, Gly-173, and Val-175. Residue His-178 participates in Zn(2+) binding. Residues Gly-185, Gly-187, and Asp-189 each coordinate Ca(2+). Residue His-191 coordinates Zn(2+). The Ca(2+) site is built by Asp-193, Glu-194, and Glu-196. Residue His-213 coordinates Zn(2+). Glu-214 is a catalytic residue. Positions 217 and 223 each coordinate Zn(2+). Hemopexin repeat units follow at residues 274 to 323 (PTAC…WPTL), 324 to 370 (PSGI…GFPD), 372 to 420 (VKKI…FPGI), and 421 to 464 (GPKI…WFDC). A disulfide bond links Cys-277 and Cys-464. Residues Asp-284, Glu-328, Asp-376, and Asp-425 each contribute to the Ca(2+) site.

It belongs to the peptidase M10A family. Requires Ca(2+) as cofactor. The cofactor is Zn(2+).

The protein resides in the secreted. Its subcellular location is the extracellular space. It localises to the extracellular matrix. The catalysed reaction is Hydrolysis of soluble and insoluble elastin. Specific cleavages are also produced at 14-Ala-|-Leu-15 and 16-Tyr-|-Leu-17 in the B chain of insulin.. Functionally, may be involved in tissue injury and remodeling. Has significant elastolytic activity. Can accept large and small amino acids at the P1' site, but has a preference for leucine. Aromatic or hydrophobic residues are preferred at the P1 site, with small hydrophobic residues (preferably alanine) occupying P3. The protein is Macrophage metalloelastase (MMP12) of Oryctolagus cuniculus (Rabbit).